Here is a 439-residue protein sequence, read N- to C-terminus: Ribosomal protein uS12 methylthiotransferase RimO (439 aa).

Residues 7–119 (KQLCLISLGC…IDIMIAKKQN (113 aa)) form the MTTase N-terminal domain. Residues C16, C50, C82, C151, C155, and C158 each contribute to the [4Fe-4S] cluster site. Residues 137 to 368 (TGSSVHAYVK…ALKHQNHSFK (232 aa)) enclose the Radical SAM core domain.

The protein belongs to the methylthiotransferase family. RimO subfamily. Requires [4Fe-4S] cluster as cofactor.

The protein localises to the cytoplasm. The enzyme catalyses L-aspartate(89)-[ribosomal protein uS12]-hydrogen + (sulfur carrier)-SH + AH2 + 2 S-adenosyl-L-methionine = 3-methylsulfanyl-L-aspartate(89)-[ribosomal protein uS12]-hydrogen + (sulfur carrier)-H + 5'-deoxyadenosine + L-methionine + A + S-adenosyl-L-homocysteine + 2 H(+). Functionally, catalyzes the methylthiolation of an aspartic acid residue of ribosomal protein uS12. The polypeptide is Ribosomal protein uS12 methylthiotransferase RimO (Helicobacter pylori (strain ATCC 700392 / 26695) (Campylobacter pylori)).